Here is an 890-residue protein sequence, read N- to C-terminus: Alanine--tRNA ligase (890 aa).

His-569, His-573, Cys-671, and His-675 together coordinate Zn(2+).

The protein belongs to the class-II aminoacyl-tRNA synthetase family. Zn(2+) serves as cofactor.

It localises to the cytoplasm. The enzyme catalyses tRNA(Ala) + L-alanine + ATP = L-alanyl-tRNA(Ala) + AMP + diphosphate. Its function is as follows. Catalyzes the attachment of alanine to tRNA(Ala) in a two-step reaction: alanine is first activated by ATP to form Ala-AMP and then transferred to the acceptor end of tRNA(Ala). Also edits incorrectly charged Ser-tRNA(Ala) and Gly-tRNA(Ala) via its editing domain. In Synechococcus sp. (strain CC9902), this protein is Alanine--tRNA ligase.